The following is a 227-amino-acid chain: Cytochrome c oxidase subunit 2 (227 aa).

Topologically, residues 1–14 are mitochondrial intermembrane; it reads MAYPFQLGLQDATS. The chain crosses the membrane as a helical span at residues 15 to 45; that stretch reads PIMEELMNFHDHTLMIVFLISSLVLYIISLM. Topologically, residues 46-59 are mitochondrial matrix; sequence LTTKLTHTSTMDAQ. A helical membrane pass occupies residues 60-87; it reads EVETIWTILPAVILILIALPSLRILYMM. Over 88-227 the chain is Mitochondrial intermembrane; the sequence is DEINNPVLTV…NFENWSTSMI (140 aa). Residues His-161, Cys-196, Glu-198, Cys-200, His-204, and Met-207 each contribute to the Cu cation site. Glu-198 is a Mg(2+) binding site.

Belongs to the cytochrome c oxidase subunit 2 family. As to quaternary structure, component of the cytochrome c oxidase (complex IV, CIV), a multisubunit enzyme composed of 14 subunits. The complex is composed of a catalytic core of 3 subunits MT-CO1, MT-CO2 and MT-CO3, encoded in the mitochondrial DNA, and 11 supernumerary subunits COX4I, COX5A, COX5B, COX6A, COX6B, COX6C, COX7A, COX7B, COX7C, COX8 and NDUFA4, which are encoded in the nuclear genome. The complex exists as a monomer or a dimer and forms supercomplexes (SCs) in the inner mitochondrial membrane with NADH-ubiquinone oxidoreductase (complex I, CI) and ubiquinol-cytochrome c oxidoreductase (cytochrome b-c1 complex, complex III, CIII), resulting in different assemblies (supercomplex SCI(1)III(2)IV(1) and megacomplex MCI(2)III(2)IV(2)). Found in a complex with TMEM177, COA6, COX18, COX20, SCO1 and SCO2. Interacts with TMEM177 in a COX20-dependent manner. Interacts with COX20. Interacts with COX16. The cofactor is Cu cation.

It is found in the mitochondrion inner membrane. It carries out the reaction 4 Fe(II)-[cytochrome c] + O2 + 8 H(+)(in) = 4 Fe(III)-[cytochrome c] + 2 H2O + 4 H(+)(out). Its function is as follows. Component of the cytochrome c oxidase, the last enzyme in the mitochondrial electron transport chain which drives oxidative phosphorylation. The respiratory chain contains 3 multisubunit complexes succinate dehydrogenase (complex II, CII), ubiquinol-cytochrome c oxidoreductase (cytochrome b-c1 complex, complex III, CIII) and cytochrome c oxidase (complex IV, CIV), that cooperate to transfer electrons derived from NADH and succinate to molecular oxygen, creating an electrochemical gradient over the inner membrane that drives transmembrane transport and the ATP synthase. Cytochrome c oxidase is the component of the respiratory chain that catalyzes the reduction of oxygen to water. Electrons originating from reduced cytochrome c in the intermembrane space (IMS) are transferred via the dinuclear copper A center (CU(A)) of subunit 2 and heme A of subunit 1 to the active site in subunit 1, a binuclear center (BNC) formed by heme A3 and copper B (CU(B)). The BNC reduces molecular oxygen to 2 water molecules using 4 electrons from cytochrome c in the IMS and 4 protons from the mitochondrial matrix. The protein is Cytochrome c oxidase subunit 2 (MT-CO2) of Apodemus mystacinus (Broad-toothed field mouse).